Here is a 305-residue protein sequence, read N- to C-terminus: Guanine nucleotide-binding protein subunit beta (305 aa).

7 WD repeats span residues 19-49 (NKLG…LVWD), 61-91 (APSV…VVYD), 104-133 (GHAG…MFWD), 145-176 (GHEM…KLWD), 188-218 (GNTS…RCFD), 231-260 (PSSS…EVWD), and 272-302 (GHEN…RLWS).

The protein belongs to the WD repeat G protein beta family. G proteins are composed of 3 units, alpha, beta and gamma. Binding of the beta-gamma subunit complex (git5-git11) to the alpha subunit (gpa2) facilitates interaction with GPCR git3.

It is found in the cell membrane. The protein localises to the cytoplasm. Its subcellular location is the nucleus. Beta subunit of the heterotrimeric guanine nucleotide-binding protein (G protein) involved in glucose-induced cAMP signaling. The beta-gamma subunits (git5-git11) promote binding of the alpha subunit gpa2 to GPCR git3, which senses extracellular glucose, to activate cAMP-PKA signaling and repress sexual development and gluconeogenesis. In Schizosaccharomyces pombe (strain 972 / ATCC 24843) (Fission yeast), this protein is Guanine nucleotide-binding protein subunit beta (git5).